The following is a 303-amino-acid chain: Exosome complex component RRP4 homolog (303 aa).

In terms of domain architecture, KH spans 175-213; the sequence is GILIKVPPHLIKKSKKHFHTLPYGMAVIIGCNGSVWVTP.

It belongs to the RRP4 family. Component of the RNA exosome complex. In terms of tissue distribution, ubiquitously expressed.

It localises to the nucleus. It is found in the nucleolus. The protein resides in the nucleoplasm. Functionally, non-catalytic component of the RNA exosome complex which has 3'-&gt;5' exoribonuclease activity and participates in a multitude of cellular RNA processing and degradation events. Involved in regulation of antisense ribosomal siRNA production. Involved in response to cold-warm shock. In Caenorhabditis elegans, this protein is Exosome complex component RRP4 homolog.